The chain runs to 323 residues: MKLAFLIDPIAALDPTHDSTVALMEAAQLRGHEIWIGEISDLSVHVGEPLGLLRPLKIEPVQWLGDRWQVANPWFTAGEAKRRSLHDFAAVFMRKDPPVTTAYLYATYLLDLVDPKKTRVVNSPEGLRHANEKMYALQFQSVVPRTLVSSNKAEIRAFLDELRAAVLKPLGGKAGEGILFLDPGDRNFNSLVEISTQQGQLPVMVQQYLPEAKDGDKRIILVNGEPLGAVNRVPTGREFRGNMAVGGRVEAVPITDRDREICAAVAPRLRQDGLFFVGIDVIGGYLTEVNVTSPTGIREIDRLNGVSIGDQTIAALEALVNQG.

One can recognise an ATP-grasp domain in the interval 133–317 (KMYALQFQSV…IGDQTIAALE (185 aa)). 159-215 (LDELRAAVLKPLGGKAGEGILFLDPGDRNFNSLVEISTQQGQLPVMVQQYLPEAKDG) contacts ATP. Mg(2+) contacts are provided by Glu288 and Asn290.

This sequence belongs to the prokaryotic GSH synthase family. Mg(2+) is required as a cofactor. Requires Mn(2+) as cofactor.

The catalysed reaction is gamma-L-glutamyl-L-cysteine + glycine + ATP = glutathione + ADP + phosphate + H(+). The protein operates within sulfur metabolism; glutathione biosynthesis; glutathione from L-cysteine and L-glutamate: step 2/2. The polypeptide is Glutathione synthetase (Synechococcus elongatus (strain ATCC 33912 / PCC 7942 / FACHB-805) (Anacystis nidulans R2)).